Reading from the N-terminus, the 49-residue chain is MRTKVTLACTECKQRNYDSMKNKKNDPDRLEMKKYCKFCKKHTLHRETK.

Belongs to the bacterial ribosomal protein bL33 family.

This chain is Large ribosomal subunit protein bL33, found in Clostridium beijerinckii (strain ATCC 51743 / NCIMB 8052) (Clostridium acetobutylicum).